The primary structure comprises 1169 residues: Pesticidal crystal protein Cry1Gb (1169 aa).

This sequence belongs to the delta endotoxin family.

Promotes colloidosmotic lysis by binding to the midgut epithelial cells of lepidopteran larvae. Toxic to Pieris rapae. This Bacillus thuringiensis subsp. wuhanensis protein is Pesticidal crystal protein Cry1Gb (cry1Gb).